A 325-amino-acid chain; its full sequence is GTP 3',8-cyclase (325 aa).

One can recognise a Radical SAM core domain in the interval 1 to 226 (MNTVNYLRIS…EGACYGNGPA (226 aa)). Arg-8 lines the GTP pocket. 2 residues coordinate [4Fe-4S] cluster: Cys-15 and Cys-19. S-adenosyl-L-methionine is bound at residue Tyr-21. Cys-22 is a binding site for [4Fe-4S] cluster. Arg-60 contributes to the GTP binding site. Gly-64 contacts S-adenosyl-L-methionine. Ser-91 contributes to the GTP binding site. Residue Ser-115 coordinates S-adenosyl-L-methionine. Lys-152 is a GTP binding site. Met-186 serves as a coordination point for S-adenosyl-L-methionine. 2 residues coordinate [4Fe-4S] cluster: Cys-249 and Cys-252. Residue 254–256 (RVR) participates in GTP binding. [4Fe-4S] cluster is bound at residue Cys-266.

This sequence belongs to the radical SAM superfamily. MoaA family. In terms of assembly, monomer and homodimer. [4Fe-4S] cluster serves as cofactor.

It carries out the reaction GTP + AH2 + S-adenosyl-L-methionine = (8S)-3',8-cyclo-7,8-dihydroguanosine 5'-triphosphate + 5'-deoxyadenosine + L-methionine + A + H(+). The protein operates within cofactor biosynthesis; molybdopterin biosynthesis. Functionally, catalyzes the cyclization of GTP to (8S)-3',8-cyclo-7,8-dihydroguanosine 5'-triphosphate. This chain is GTP 3',8-cyclase, found in Gloeobacter violaceus (strain ATCC 29082 / PCC 7421).